The primary structure comprises 160 residues: Succinate dehydrogenase assembly factor 2-B, mitochondrial (160 aa).

Residues 1–23 constitute a mitochondrion transit peptide; that stretch reads MLRQLKLTLNISRWIFMPWQRHA.

It belongs to the SDHAF2 family. In terms of assembly, interacts with the flavoprotein subunit within the SDH catalytic dimer.

Its subcellular location is the mitochondrion matrix. In terms of biological role, plays an essential role in the assembly of succinate dehydrogenase (SDH), an enzyme complex (also referred to as respiratory complex II) that is a component of both the tricarboxylic acid (TCA) cycle and the mitochondrial electron transport chain, and which couples the oxidation of succinate to fumarate with the reduction of ubiquinone (coenzyme Q) to ubiquinol. Required for flavinylation (covalent attachment of FAD) of the flavoprotein subunit of the SDH catalytic dimer. The sequence is that of Succinate dehydrogenase assembly factor 2-B, mitochondrial from Drosophila pseudoobscura pseudoobscura (Fruit fly).